Here is a 191-residue protein sequence, read N- to C-terminus: Ion-translocating oxidoreductase complex subunit B (191 aa).

The hydrophobic stretch occupies residues 1–26; sequence MSLVLVAVLALLGLCLIAGAILGFAA. The 4Fe-4S domain occupies 32 to 90; that stretch reads EGDPIAEQINALLPQTQCGQCGYPGCKPYAEAIAGGDKINKCPPGGEATIQALADLLDV. [4Fe-4S] cluster is bound by residues cysteine 49, cysteine 52, cysteine 57, cysteine 73, cysteine 114, cysteine 117, cysteine 120, cysteine 124, cysteine 144, cysteine 147, cysteine 150, and cysteine 154. 2 consecutive 4Fe-4S ferredoxin-type domains span residues 105–134 and 135–164; these read MVAF…GAAR and QMHT…MIEV.

This sequence belongs to the 4Fe4S bacterial-type ferredoxin family. RnfB subfamily. As to quaternary structure, the complex is composed of six subunits: RnfA, RnfB, RnfC, RnfD, RnfE and RnfG. Requires [4Fe-4S] cluster as cofactor.

The protein resides in the cell inner membrane. Its function is as follows. Part of a membrane-bound complex that couples electron transfer with translocation of ions across the membrane. This Ectopseudomonas mendocina (strain ymp) (Pseudomonas mendocina) protein is Ion-translocating oxidoreductase complex subunit B.